Consider the following 249-residue polypeptide: 5'-nucleotidase SurE (249 aa).

Residues D8, D9, S39, and N91 each contribute to the a divalent metal cation site.

It belongs to the SurE nucleotidase family. Requires a divalent metal cation as cofactor.

It is found in the cytoplasm. It catalyses the reaction a ribonucleoside 5'-phosphate + H2O = a ribonucleoside + phosphate. In terms of biological role, nucleotidase that shows phosphatase activity on nucleoside 5'-monophosphates. This Pseudomonas aeruginosa (strain UCBPP-PA14) protein is 5'-nucleotidase SurE.